Reading from the N-terminus, the 303-residue chain is Nitrogenase iron protein (303 aa).

11-18 (GKGGIGKS) lines the ATP pocket. Cys-112 is a [4Fe-4S] cluster binding site. Arg-115 is subject to ADP-ribosylarginine; by dinitrogenase reductase ADP-ribosyltransferase. Position 147 (Cys-147) interacts with [4Fe-4S] cluster.

It belongs to the NifH/BchL/ChlL family. As to quaternary structure, homodimer. The cofactor is [4Fe-4S] cluster. Post-translationally, the reversible ADP-ribosylation of Arg-115 inactivates the nitrogenase reductase and regulates nitrogenase activity.

It carries out the reaction N2 + 8 reduced [2Fe-2S]-[ferredoxin] + 16 ATP + 16 H2O = H2 + 8 oxidized [2Fe-2S]-[ferredoxin] + 2 NH4(+) + 16 ADP + 16 phosphate + 6 H(+). In terms of biological role, the key enzymatic reactions in nitrogen fixation are catalyzed by the nitrogenase complex, which has 2 components: the iron protein and the molybdenum-iron protein. The protein is Nitrogenase iron protein of Wolinella succinogenes (strain ATCC 29543 / DSM 1740 / CCUG 13145 / JCM 31913 / LMG 7466 / NCTC 11488 / FDC 602W) (Vibrio succinogenes).